Consider the following 317-residue polypeptide: L-lactate dehydrogenase 1 (317 aa).

Residues valine 17, aspartate 38, lysine 43, tyrosine 69, and 83 to 84 (GA) contribute to the NAD(+) site. Positions 86 and 92 each coordinate substrate. Residues serine 105, 122–124 (ATN), and serine 147 each bind NAD(+). 124 to 127 (NPVD) is a substrate binding site. 152-155 (DSAR) contributes to the substrate binding site. Residue histidine 179 is the Proton acceptor of the active site. Tyrosine 223 carries the post-translational modification Phosphotyrosine. Threonine 232 lines the substrate pocket.

Belongs to the LDH/MDH superfamily. LDH family. Homotetramer.

The protein resides in the cytoplasm. The catalysed reaction is (S)-lactate + NAD(+) = pyruvate + NADH + H(+). The protein operates within fermentation; pyruvate fermentation to lactate; (S)-lactate from pyruvate: step 1/1. Its function is as follows. Catalyzes the conversion of lactate to pyruvate (Potential). Appears to be the primary factor that allows S.aureus growth during nitrosative stress in both aerobically and anaerobically cultured cells. The polypeptide is L-lactate dehydrogenase 1 (Staphylococcus aureus (strain MRSA252)).